We begin with the raw amino-acid sequence, 254 residues long: Coiled-coil domain-containing protein 152 (254 aa).

The stretch at 61-246 forms a coiled coil; that stretch reads SIKEECATLH…LEQRLSVGKD (186 aa).

As to expression, detected in stomach.

This Homo sapiens (Human) protein is Coiled-coil domain-containing protein 152 (CCDC152).